The chain runs to 255 residues: ATP synthase subunit a (255 aa).

A run of 6 helical transmembrane segments spans residues 40-60 (TEPIFMSLLIMVLFVLLASEV), 109-129 (LIGGSAAFIFFSNASALIPGV), 135-155 (NLNITIGCAVVVFVLFNYYGL), 163-183 (VAHLAGPKWYLAPLIFPIEVI), 196-218 (LMLNIGVDHLVASIFLGLVALFV), and 230-250 (IVVQTLVFCLLSCIYIGLATE).

The protein belongs to the ATPase A chain family. F-type ATPases have 2 components, CF(1) - the catalytic core - and CF(0) - the membrane proton channel. CF(1) has five subunits: alpha(3), beta(3), gamma(1), delta(1), epsilon(1). CF(0) has three main subunits: a(1), b(2) and c(9-12). The alpha and beta chains form an alternating ring which encloses part of the gamma chain. CF(1) is attached to CF(0) by a central stalk formed by the gamma and epsilon chains, while a peripheral stalk is formed by the delta and b chains.

It localises to the cell inner membrane. Key component of the proton channel; it plays a direct role in the translocation of protons across the membrane. In Sorangium cellulosum (strain So ce56) (Polyangium cellulosum (strain So ce56)), this protein is ATP synthase subunit a.